Here is a 326-residue protein sequence, read N- to C-terminus: Pancreas transcription factor 1 subunit alpha (326 aa).

In terms of domain architecture, bHLH spans 162–214 (QLRQAANVRERRRMQSINDAFEGLRSHIPTLPYEKRLSKVDTLRLAIGYINFL). The segment covering 229–240 (TGGCGGPGGSRH) has biased composition (gly residues). Disordered regions lie at residues 229–249 (TGGCGGPGGSRHLGGDSPGNQ) and 304–326 (DPRKLNSKSFDNIENEPPFEFVS).

In terms of assembly, component of the pancreas transcription factor 1 complex (PTF1) which is composed of TCF3/p75, TCF12/p64 and PTF1A/p48. TCF3 is responsible for the nuclear import of the p48/p64 complex. Interacts with TCF3 and RBPSUH/RBP-Jkappa. As to expression, exocrine pancreas-specific. Expressed in azaserine-induced pancreatic tumors (at protein level). Expressed in AR42J cells but not in ARIP, DSL6A, or DSL6B cells. Down-regulation is associated with the change of an azaserine-induced acinar cell carcinoma to a ductal phenotype.

Its subcellular location is the nucleus. The protein localises to the cytoplasm. Functionally, transcription factor implicated in the cell fate determination in various organs. Binds to the E-box consensus sequence 5'-CANNTG-3'. Plays a role in early and late pancreas development and differentiation. Important for determining whether cells allocated to the pancreatic buds continue towards pancreatic organogenesis or revert back to duodenal fates. May be involved in the maintenance of exocrine pancreas-specific gene expression including ELA1 and amylase. Required for the formation of pancreatic acinar and ductal cells. Plays an important role in cerebellar development. Directly regulated by FOXN4 and RORC during retinal development, FOXN4-PTF1A pathway plays a central role in directing the differentiation of retinal progenitors towards horizontal and amacrine fates. The protein is Pancreas transcription factor 1 subunit alpha (Ptf1a) of Rattus norvegicus (Rat).